We begin with the raw amino-acid sequence, 200 residues long: Small ribosomal subunit protein eS1 (200 aa).

Belongs to the eukaryotic ribosomal protein eS1 family.

This is Small ribosomal subunit protein eS1 from Thermococcus onnurineus (strain NA1).